The following is a 484-amino-acid chain: MSDRIRVRYAPSPTGYLHIGNARTALFNYLYAKHYNGDFVIRIEDTDKKRNLEDGETSQFDNLKWLGLDWDESVDKDNGYGPYRQSERQHIYQPLIDQLLAEDKAYKCYMTEEELEAEREAQIARGEMPRYGGQHAHLTEEQRQQFEAEGRQPSIRFRVPQNQTYSFDDMVKGNISFDSNGIGDWVIVKKDGIPTYNFAVAIDDHYMQISDVIRGDDHISNTPKQIMIYEAFGWEPPRFGHMSLIVNEERKKLSKRDGQILQFIEQYRDLGYLPEALFNFIALLGWSPEGEEEIFSKEEFIKIFDEKRLSKSPAFFDKQKLAWVNNQYMKQKDTETVFQLALPHLIKANLIPEVPSEEDLSWGRKLIALYQKEMSYAGEIVPLSEMFFKEMPALGEEEQQVINGEQVPELMTHLFSKLEALEPFESAEIKKTIKEVQKETGIKGKQLFMPIRVAVTGQMHGPELPNTIEVLGKEKVLNRLKQYK.

Positions 11–21 match the 'HIGH' region motif; it reads PSPTGYLHIGN. A 'KMSKS' region motif is present at residues 252–256; the sequence is KLSKR. An ATP-binding site is contributed by Lys-255.

It belongs to the class-I aminoacyl-tRNA synthetase family. Glutamate--tRNA ligase type 1 subfamily. Monomer.

The protein resides in the cytoplasm. It catalyses the reaction tRNA(Glu) + L-glutamate + ATP = L-glutamyl-tRNA(Glu) + AMP + diphosphate. In terms of biological role, catalyzes the attachment of glutamate to tRNA(Glu) in a two-step reaction: glutamate is first activated by ATP to form Glu-AMP and then transferred to the acceptor end of tRNA(Glu). In Staphylococcus aureus (strain Newman), this protein is Glutamate--tRNA ligase.